The chain runs to 756 residues: Glutathione biosynthesis bifunctional protein GshAB (756 aa).

A glutamate--cysteine ligase region spans residues 1–338 (MNYRELMQKK…TGDIFNEQVA (338 aa)). Residues 493-751 (KKILSAAGFH…LTMDVLKLLY (259 aa)) form the ATP-grasp domain. Residue 520–578 (LRYANKAFVVKPKSTNYGLGITIFKEGASLEDFTEALRIAFKEDTAVLIEEFLPGTEYR) participates in ATP binding. Positions 700, 721, and 723 each coordinate Mg(2+). Mn(2+) is bound by residues Asp-700, Glu-721, and Asn-723.

This sequence in the N-terminal section; belongs to the glutamate--cysteine ligase type 1 family. Type 2 subfamily. As to quaternary structure, monomer. Mg(2+) is required as a cofactor. Requires Mn(2+) as cofactor.

The enzyme catalyses L-cysteine + L-glutamate + ATP = gamma-L-glutamyl-L-cysteine + ADP + phosphate + H(+). The catalysed reaction is gamma-L-glutamyl-L-cysteine + glycine + ATP = glutathione + ADP + phosphate + H(+). It participates in sulfur metabolism; glutathione biosynthesis; glutathione from L-cysteine and L-glutamate: step 1/2. The protein operates within sulfur metabolism; glutathione biosynthesis; glutathione from L-cysteine and L-glutamate: step 2/2. Functionally, synthesizes glutathione from L-glutamate and L-cysteine via gamma-L-glutamyl-L-cysteine. The protein is Glutathione biosynthesis bifunctional protein GshAB of Enterococcus faecalis (strain ATCC 700802 / V583).